The sequence spans 658 residues: Glycogen debranching enzyme (658 aa).

The Nucleophile role is filled by Asp-336. The active-site Proton donor is the Glu-371. The segment at 459–484 (EANGEENRDGTNSNYSDNHGKEGLGG) is disordered.

This sequence belongs to the glycosyl hydrolase 13 family.

The catalysed reaction is Hydrolysis of (1-&gt;6)-alpha-D-glucosidic linkages to branches with degrees of polymerization of three or four glucose residues in limit dextrin.. Its pathway is glycan degradation; glycogen degradation. Removes maltotriose and maltotetraose chains that are attached by 1,6-alpha-linkage to the limit dextrin main chain, generating a debranched limit dextrin. The protein is Glycogen debranching enzyme of Salmonella paratyphi A (strain ATCC 9150 / SARB42).